A 454-amino-acid chain; its full sequence is Probable ECA polymerase (454 aa).

11 consecutive transmembrane segments (helical) span residues 3 to 23, 39 to 59, 61 to 81, 119 to 139, 154 to 174, 180 to 200, 201 to 221, 222 to 242, 340 to 360, 377 to 397, and 409 to 429; these read LGQFGGLFCIYLIAVIFILTL, FSMLYLLTFYFGFPLTCMLVF, FGVAVVPVEYLLYAMLSATAF, LALVAVGTVGIFFMQNGFLLF, GVALKRFFYFFIPAMLVVYFL, AWFFFLASTVAFGILTYVIVG, GTRANIIIAFSLFLFIGIVRG, WITLWMLAAAGVFGIVGMFWL, LVVMGGVLFIPLGAIVVGLII, YKAAILQSFCFGAVFNIIVLA, and VFFCVIFGACLVLAKLLYWLF.

Belongs to the WzyE family. In terms of assembly, probably part of a complex composed of WzxE, WzyE and WzzE.

It localises to the cell inner membrane. The protein operates within bacterial outer membrane biogenesis; enterobacterial common antigen biosynthesis. Functionally, probably involved in the polymerization of enterobacterial common antigen (ECA) trisaccharide repeat units. The protein is Probable ECA polymerase of Yersinia pseudotuberculosis serotype O:1b (strain IP 31758).